Consider the following 310-residue polypeptide: DNA damage-repair/toleration protein DRT102 (310 aa).

The residue at position 2 (alanine 2) is an N-acetylalanine. Residues isoleucine 219–glutamate 282 form the Cupin type-2 domain.

This chain is DNA damage-repair/toleration protein DRT102 (DRT102), found in Arabidopsis thaliana (Mouse-ear cress).